We begin with the raw amino-acid sequence, 231 residues long: ATP phosphoribosyltransferase (231 aa).

It belongs to the ATP phosphoribosyltransferase family. Short subfamily. Heteromultimer composed of HisG and HisZ subunits.

It is found in the cytoplasm. It catalyses the reaction 1-(5-phospho-beta-D-ribosyl)-ATP + diphosphate = 5-phospho-alpha-D-ribose 1-diphosphate + ATP. The protein operates within amino-acid biosynthesis; L-histidine biosynthesis; L-histidine from 5-phospho-alpha-D-ribose 1-diphosphate: step 1/9. Its function is as follows. Catalyzes the condensation of ATP and 5-phosphoribose 1-diphosphate to form N'-(5'-phosphoribosyl)-ATP (PR-ATP). Has a crucial role in the pathway because the rate of histidine biosynthesis seems to be controlled primarily by regulation of HisG enzymatic activity. The sequence is that of ATP phosphoribosyltransferase (hisG) from Rhizobium etli (strain CIAT 652).